The primary structure comprises 337 residues: Ribosomal RNA small subunit methyltransferase H (337 aa).

S-adenosyl-L-methionine-binding positions include 36–38, Asp-56, Phe-82, Asp-100, and Gln-107; that span reads GGH. The disordered stretch occupies residues 317–337; sequence RRSGRIPNPQSPIPASQGDAR.

Belongs to the methyltransferase superfamily. RsmH family.

It is found in the cytoplasm. It catalyses the reaction cytidine(1402) in 16S rRNA + S-adenosyl-L-methionine = N(4)-methylcytidine(1402) in 16S rRNA + S-adenosyl-L-homocysteine + H(+). In terms of biological role, specifically methylates the N4 position of cytidine in position 1402 (C1402) of 16S rRNA. The chain is Ribosomal RNA small subunit methyltransferase H from Xanthomonas oryzae pv. oryzae (strain KACC10331 / KXO85).